Reading from the N-terminus, the 113-residue chain is Protein translation factor SUI1 homolog 2 (113 aa).

An N-acetylserine modification is found at Ser-2.

Belongs to the SUI1 family.

Its function is as follows. Probably involved in translation. In Arabidopsis thaliana (Mouse-ear cress), this protein is Protein translation factor SUI1 homolog 2.